The primary structure comprises 229 residues: Cytochrome c oxidase subunit 2 (229 aa).

Residues 1-26 (MANWTQLGLQDASSPLMEELIYFHDY) lie on the Mitochondrial intermembrane side of the membrane. Residues 27-48 (TLIILTLITILVFYGLASLLFS) traverse the membrane as a helical segment. Topologically, residues 49–62 (SNTNRFFLEGQGLE) are mitochondrial matrix. The chain crosses the membrane as a helical span at residues 63–82 (TVWTIIPAVILIFIALPSLQ). Over 83-229 (LLYLMDEVNN…ETWVSNFITE (147 aa)) the chain is Mitochondrial intermembrane. Cu cation contacts are provided by His-161, Cys-196, Glu-198, Cys-200, His-204, and Met-207. Glu-198 contributes to the Mg(2+) binding site.

It belongs to the cytochrome c oxidase subunit 2 family. As to quaternary structure, component of the cytochrome c oxidase (complex IV, CIV), a multisubunit enzyme composed of a catalytic core of 3 subunits and several supernumerary subunits. The complex exists as a monomer or a dimer and forms supercomplexes (SCs) in the inner mitochondrial membrane with ubiquinol-cytochrome c oxidoreductase (cytochrome b-c1 complex, complex III, CIII). Cu cation serves as cofactor.

It localises to the mitochondrion inner membrane. It carries out the reaction 4 Fe(II)-[cytochrome c] + O2 + 8 H(+)(in) = 4 Fe(III)-[cytochrome c] + 2 H2O + 4 H(+)(out). Its function is as follows. Component of the cytochrome c oxidase, the last enzyme in the mitochondrial electron transport chain which drives oxidative phosphorylation. The respiratory chain contains 3 multisubunit complexes succinate dehydrogenase (complex II, CII), ubiquinol-cytochrome c oxidoreductase (cytochrome b-c1 complex, complex III, CIII) and cytochrome c oxidase (complex IV, CIV), that cooperate to transfer electrons derived from NADH and succinate to molecular oxygen, creating an electrochemical gradient over the inner membrane that drives transmembrane transport and the ATP synthase. Cytochrome c oxidase is the component of the respiratory chain that catalyzes the reduction of oxygen to water. Electrons originating from reduced cytochrome c in the intermembrane space (IMS) are transferred via the dinuclear copper A center (CU(A)) of subunit 2 and heme A of subunit 1 to the active site in subunit 1, a binuclear center (BNC) formed by heme A3 and copper B (CU(B)). The BNC reduces molecular oxygen to 2 water molecules using 4 electrons from cytochrome c in the IMS and 4 protons from the mitochondrial matrix. The protein is Cytochrome c oxidase subunit 2 (COII) of Patiria pectinifera (Starfish).